The sequence spans 360 residues: Dehydrogenase mokE (360 aa).

Position 50 to 53 (50 to 53 (SDTK)) interacts with NADP(+). 134-141 (AGISTAGL) provides a ligand contact to substrate. NADP(+) is bound by residues 173-176 (STAT), 196-199 (SPHN), tyrosine 214, 261-262 (LN), and threonine 279. 281–285 (GPTIF) provides a ligand contact to substrate. NADP(+) is bound at residue 350–351 (LS).

This sequence belongs to the zinc-containing alcohol dehydrogenase family. Monomer.

The protein operates within polyketide biosynthesis; lovastatin biosynthesis. Dehydrogenase; part of the gene cluster that mediates the biosynthesis of monakolin K, also known as lovastatin, and which acts as a potent competitive inhibitor of HMG-CoA reductase. Monakolin K biosynthesis is performed in two stages. The first stage is catalyzed by the nonaketide synthase mokA, which belongs to type I polyketide synthases and catalyzes the iterative nine-step formation of the polyketide. This PKS stage is completed by the action of dehydrogenase mokE, which catalyzes the NADPH-dependent reduction of the unsaturated tetra-, penta- and heptaketide intermediates that arise during the mokA-mediated biosynthesis of the nonaketide chain and leads to dihydromonacolin L. Covalently bound dihydromonacolin L is released from mokA by the mokD esterase. Conversion of dihydromonacolin L into monacolin L and then monacolin J is subsequently performed with the participation of molecular oxygen and P450 monoogygenase mokC. Finally, mokF performs the conversion of monacoline J to monacoline K through the addition of the side-chain diketide moiety (2R)-2-methylbutanoate produced by the diketide synthase mokB. This is Dehydrogenase mokE from Monascus pilosus (Red mold).